The following is a 138-amino-acid chain: Cellular retinoic acid-binding protein 2 (138 aa).

Positions 21–31 (KVLGVNVMLRK) match the Nuclear localization signal motif. Residue Lys102 forms a Glycyl lysine isopeptide (Lys-Gly) (interchain with G-Cter in SUMO) linkage. 133-135 (RVY) contributes to the all-trans-retinoate binding site.

Belongs to the calycin superfamily. Fatty-acid binding protein (FABP) family. In terms of assembly, interacts with importin alpha, RXR and RARA. In terms of processing, sumoylated in response to retinoic acid binding, sumoylation is critical for dissociation from ER and subsequent nuclear translocation.

Its subcellular location is the cytoplasm. It is found in the endoplasmic reticulum. It localises to the nucleus. In terms of biological role, transports retinoic acid to the nucleus. Regulates the access of retinoic acid to the nuclear retinoic acid receptors. In Bos taurus (Bovine), this protein is Cellular retinoic acid-binding protein 2 (CRABP2).